Consider the following 634-residue polypeptide: Probable potassium transport system protein Kup 1 (634 aa).

12 consecutive transmembrane segments (helical) span residues 20–40, 64–84, 110–130, 148–168, 176–196, 224–244, 256–276, 290–310, 348–368, 377–397, 405–425, and 430–450; these read FLTL…TSPL, VMSL…VLLI, FAAI…DAII, PVFD…LFVV, VAAW…LGGI, AGLL…ALYA, FAWF…QGAM, FLFP…ATII, IYIP…VFAF, AYGI…YFVM, VATS…FLMA, and IFEG…VMIT.

It belongs to the HAK/KUP transporter (TC 2.A.72) family.

The protein resides in the cell inner membrane. It carries out the reaction K(+)(in) + H(+)(in) = K(+)(out) + H(+)(out). In terms of biological role, transport of potassium into the cell. Likely operates as a K(+):H(+) symporter. This chain is Probable potassium transport system protein Kup 1, found in Rhodopseudomonas palustris (strain BisB5).